A 181-amino-acid polypeptide reads, in one-letter code: Shikimate kinase 2 (181 aa).

12–17 (GCGKTT) contacts ATP. Mg(2+) contacts are provided by Thr-16 and Asp-32. Substrate contacts are provided by Asp-34, Arg-58, and Gly-79. The interval 112–126 (EAEPEADLRPTLTGK) is LID domain. Position 120 (Arg-120) interacts with ATP. Position 139 (Arg-139) interacts with substrate.

Belongs to the shikimate kinase family. AroL subfamily. In terms of assembly, monomer. Mg(2+) serves as cofactor.

The protein resides in the cytoplasm. It catalyses the reaction shikimate + ATP = 3-phosphoshikimate + ADP + H(+). It functions in the pathway metabolic intermediate biosynthesis; chorismate biosynthesis; chorismate from D-erythrose 4-phosphate and phosphoenolpyruvate: step 5/7. Functionally, catalyzes the specific phosphorylation of the 3-hydroxyl group of shikimic acid using ATP as a cosubstrate. The protein is Shikimate kinase 2 of Salmonella heidelberg (strain SL476).